The chain runs to 456 residues: Probable glycine dehydrogenase (decarboxylating) subunit 1 (456 aa).

This sequence belongs to the GcvP family. N-terminal subunit subfamily. In terms of assembly, the glycine cleavage system is composed of four proteins: P, T, L and H. In this organism, the P 'protein' is a heterodimer of two subunits.

It catalyses the reaction N(6)-[(R)-lipoyl]-L-lysyl-[glycine-cleavage complex H protein] + glycine + H(+) = N(6)-[(R)-S(8)-aminomethyldihydrolipoyl]-L-lysyl-[glycine-cleavage complex H protein] + CO2. Its function is as follows. The glycine cleavage system catalyzes the degradation of glycine. The P protein binds the alpha-amino group of glycine through its pyridoxal phosphate cofactor; CO(2) is released and the remaining methylamine moiety is then transferred to the lipoamide cofactor of the H protein. This chain is Probable glycine dehydrogenase (decarboxylating) subunit 1, found in Legionella pneumophila (strain Lens).